The chain runs to 248 residues: tRNA pseudouridine synthase A (248 aa).

The active-site Nucleophile is D53. Y111 lines the substrate pocket.

The protein belongs to the tRNA pseudouridine synthase TruA family. As to quaternary structure, homodimer.

It catalyses the reaction uridine(38/39/40) in tRNA = pseudouridine(38/39/40) in tRNA. Formation of pseudouridine at positions 38, 39 and 40 in the anticodon stem and loop of transfer RNAs. The polypeptide is tRNA pseudouridine synthase A (Listeria welshimeri serovar 6b (strain ATCC 35897 / DSM 20650 / CCUG 15529 / CIP 8149 / NCTC 11857 / SLCC 5334 / V8)).